The following is a 152-amino-acid chain: UPF0266 membrane protein YobD (152 aa).

The next 3 helical transmembrane spans lie at 6-26 (LVLI…QFIM), 45-65 (VDSV…VTSH), and 67-87 (AQMT…IFWI).

This sequence belongs to the UPF0266 family.

Its subcellular location is the cell inner membrane. The sequence is that of UPF0266 membrane protein YobD from Salmonella dublin (strain CT_02021853).